Reading from the N-terminus, the 194-residue chain is Transmembrane protein 212 (194 aa).

5 consecutive transmembrane segments (helical) span residues Ile-11–Phe-31, Ile-44–Ala-64, Ala-76–Leu-96, Ala-99–Gly-119, and Leu-148–Ile-168.

It is found in the membrane. In Homo sapiens (Human), this protein is Transmembrane protein 212 (TMEM212).